The chain runs to 591 residues: V-type ATP synthase alpha chain (591 aa).

Residue 233-240 participates in ATP binding; it reads GPFGAGKT.

This sequence belongs to the ATPase alpha/beta chains family.

It carries out the reaction ATP + H2O + 4 H(+)(in) = ADP + phosphate + 5 H(+)(out). Produces ATP from ADP in the presence of a proton gradient across the membrane. The V-type alpha chain is a catalytic subunit. The sequence is that of V-type ATP synthase alpha chain from Streptococcus pyogenes serotype M18 (strain MGAS8232).